Here is a 350-residue protein sequence, read N- to C-terminus: Beta-ketodecanoyl-[acyl-carrier-protein] synthase (350 aa).

C133 is a catalytic residue.

Belongs to the thiolase-like superfamily. Beta-ketoacyl-ACP synthases family.

The enzyme catalyses octanoyl-CoA + malonyl-[ACP] + H(+) = 3-oxodecanoyl-[ACP] + CO2 + CoA. It functions in the pathway lipid metabolism; fatty acid biosynthesis. Its function is as follows. Catalyzes the condensation of octanoyl-CoA, obtained from exogenously supplied fatty acids via beta-oxidation, with malonyl-[acyl-carrier protein], forming 3-oxodecanoyl-[acyl-carrier protein], an intermediate of the fatty acid elongation cycle that can then be extended to supply all of the cellular fatty acid needs. The enzyme thereby shunts fatty acid degradation intermediates from the beta-oxidation pathway into de novo fatty acid biosynthesis. This chain is Beta-ketodecanoyl-[acyl-carrier-protein] synthase, found in Pseudomonas aeruginosa (strain ATCC 15692 / DSM 22644 / CIP 104116 / JCM 14847 / LMG 12228 / 1C / PRS 101 / PAO1).